The chain runs to 352 residues: Uroporphyrinogen decarboxylase (352 aa).

Residues 27-31, aspartate 77, tyrosine 154, threonine 209, and histidine 325 contribute to the substrate site; that span reads RQAGR.

This sequence belongs to the uroporphyrinogen decarboxylase family. As to quaternary structure, homodimer.

The protein localises to the cytoplasm. The catalysed reaction is uroporphyrinogen III + 4 H(+) = coproporphyrinogen III + 4 CO2. The protein operates within porphyrin-containing compound metabolism; protoporphyrin-IX biosynthesis; coproporphyrinogen-III from 5-aminolevulinate: step 4/4. Its function is as follows. Catalyzes the decarboxylation of four acetate groups of uroporphyrinogen-III to yield coproporphyrinogen-III. The sequence is that of Uroporphyrinogen decarboxylase from Legionella pneumophila subsp. pneumophila (strain Philadelphia 1 / ATCC 33152 / DSM 7513).